A 354-amino-acid polypeptide reads, in one-letter code: NAD-dependent epimerase/dehydratase ALT6 (354 aa).

NADP(+) contacts are provided by Lys41 and Tyr174.

The protein belongs to the NAD(P)-dependent epimerase/dehydratase family. Dihydroflavonol-4-reductase subfamily.

It functions in the pathway mycotoxin biosynthesis. Its function is as follows. NAD-dependent epimerase/dehydratase; part of the gene cluster that mediates the biosynthesis of the host-selective toxins (HSTs) AAL-toxins, sphinganine-analog mycotoxins responsible for Alternaria stem canker on tomato by the tomato pathotype. The biosynthesis starts with the polyketide synthase ALT1-catalyzed C-16 carbon chain assembly from one starter acetyl-CoA unit with malonyl-CoA extender units. ALT1 also selectively transfers methyl groups at the first and the third cycle of chain elongation for AAL toxin. The C-16 polyketide chain is released from the enzyme by a nucleophilic attack of a carbanion, which is derived from R-carbon of glycin by decarboxylation, on the carbonyl carbon of polyketide acyl chain. This step is probably catalyzed by a pyridoxal 5'-phosphate-dependent aminoacyl transferase ALT4. The respective functions of the other enzymes encoded by the cluster have still to be elucidated. The sphingosine N-acyltransferase-like protein ALT7 seems not to act as a resistance/self-tolerance factor against the toxin in the toxin biosynthetic gene cluster, contrary to what is expected. The sequence is that of NAD-dependent epimerase/dehydratase ALT6 from Alternaria alternata (Alternaria rot fungus).